The chain runs to 51 residues: Large ribosomal subunit protein eL40 (51 aa).

Belongs to the eukaryotic ribosomal protein eL40 family.

This is Large ribosomal subunit protein eL40 from Thermofilum pendens (strain DSM 2475 / Hrk 5).